The following is a 96-amino-acid chain: Co-chaperonin GroES (96 aa).

The protein belongs to the GroES chaperonin family. Heptamer of 7 subunits arranged in a ring. Interacts with the chaperonin GroEL.

Its subcellular location is the cytoplasm. In terms of biological role, together with the chaperonin GroEL, plays an essential role in assisting protein folding. The GroEL-GroES system forms a nano-cage that allows encapsulation of the non-native substrate proteins and provides a physical environment optimized to promote and accelerate protein folding. GroES binds to the apical surface of the GroEL ring, thereby capping the opening of the GroEL channel. The protein is Co-chaperonin GroES of Allochromatium vinosum (Chromatium vinosum).